A 1939-amino-acid chain; its full sequence is Myosin-4 (1939 aa).

In terms of domain architecture, Myosin N-terminal SH3-like spans Asp-33–Pro-82. Phosphoserine is present on Ser-36. Thr-64 and Thr-69 each carry phosphothreonine. Ser-79 is subject to Phosphoserine. A Myosin motor domain is found at Asp-86–Asp-782. Lys-130 bears the N6,N6,N6-trimethyllysine mark. Gly-179–Thr-186 contacts ATP. Tyr-389 bears the Phosphotyrosine mark. Position 391 is a phosphothreonine (Thr-391). At Ser-392 the chain carries Phosphoserine. Thr-419 is subject to Phosphothreonine. Tyr-424 bears the Phosphotyrosine mark. At Ser-625 the chain carries Phosphoserine. Positions Leu-659–Glu-681 are actin-binding. Pros-methylhistidine is present on His-757. Residues Lys-761–Gly-775 form an actin-binding region. Position 776 is a phosphothreonine (Thr-776). The IQ domain occupies Leu-785–Ser-814. The stretch at Leu-843 to Glu-1939 forms a coiled coil. Ser-1092 and Ser-1096 each carry phosphoserine. Disordered stretches follow at residues Ala-1128–Leu-1147 and Arg-1153–Glu-1172. Ser-1162 and Ser-1237 each carry phosphoserine. Thr-1241 is modified (phosphothreonine). Ser-1243 bears the Phosphoserine mark. Thr-1255 carries the post-translational modification Phosphothreonine. The residue at position 1261 (Ser-1261) is a Phosphoserine. Thr-1265 is subject to Phosphothreonine. The interval Glu-1276–Asp-1299 is disordered. Ser-1278 carries the phosphoserine modification. The segment covering Leu-1284–Asp-1299 has biased composition (basic and acidic residues). At Thr-1286 the chain carries Phosphothreonine. Phosphoserine occurs at positions 1288, 1292, 1303, 1306, and 1413. At Tyr-1464 the chain carries Phosphotyrosine. Thr-1467 bears the Phosphothreonine mark. Ser-1474 is modified (phosphoserine). Tyr-1492 is modified (phosphotyrosine). Ser-1495 is modified (phosphoserine). A Phosphothreonine modification is found at Thr-1501. Residue Ser-1514 is modified to Phosphoserine. A Phosphothreonine modification is found at Thr-1517. Residues Ser-1542, Ser-1547, Ser-1554, Ser-1574, Ser-1600, Ser-1603, Ser-1714, and Ser-1726 each carry the phosphoserine modification. 2 positions are modified to phosphothreonine: Thr-1730 and Thr-1736. Ser-1739 is modified (phosphoserine).

It belongs to the TRAFAC class myosin-kinesin ATPase superfamily. Myosin family. Muscle myosin is a hexameric protein that consists of 2 heavy chain subunits (MHC), 2 alkali light chain subunits (MLC) and 2 regulatory light chain subunits (MLC-2). Expressed in type 2b myofibers in the tibialis anterior muscle (at protein level).

The protein resides in the cytoplasm. Its subcellular location is the myofibril. Muscle contraction. This is Myosin-4 (Myh4) from Mus musculus (Mouse).